A 653-amino-acid chain; its full sequence is Chromosomal replication initiator protein DnaA (653 aa).

The tract at residues 1-100 (MADVPADLAA…SAGEPPASAS (100 aa)) is domain I, interacts with DnaA modulators. The tract at residues 86–310 (ITVDDSAGEP…PAPATGPGEP (225 aa)) is disordered. Residues 101 to 312 (PAPPRYEEPE…PATGPGEPTA (212 aa)) form a domain II region. 2 stretches are compositionally biased toward basic and acidic residues: residues 120 to 150 (DPYESRGREGYEGYGRHRADDHRQGHNDRHQ) and 221 to 267 (PSYD…RRNI). The span at 284–310 (GSALPASSGAPGPLAAQPAPATGPGEP) shows a compositional bias: low complexity. A domain III, AAA+ region region spans residues 313-529 (RLNPKYLFDT…GALIRVTAFA (217 aa)). ATP is bound by residues Gly-357, Gly-359, Lys-360, and Thr-361. A domain IV, binds dsDNA region spans residues 530–653 (SLNRQPVDLG…TELTNRIKNG (124 aa)).

Belongs to the DnaA family. In terms of assembly, oligomerizes as a right-handed, spiral filament on DNA at oriC.

It is found in the cytoplasm. Functionally, plays an essential role in the initiation and regulation of chromosomal replication. ATP-DnaA binds to the origin of replication (oriC) to initiate formation of the DNA replication initiation complex once per cell cycle. Binds the DnaA box (a 9 base pair repeat at the origin) and separates the double-stranded (ds)DNA. Forms a right-handed helical filament on oriC DNA; dsDNA binds to the exterior of the filament while single-stranded (ss)DNA is stabiized in the filament's interior. The ATP-DnaA-oriC complex binds and stabilizes one strand of the AT-rich DNA unwinding element (DUE), permitting loading of DNA polymerase. After initiation quickly degrades to an ADP-DnaA complex that is not apt for DNA replication. Binds acidic phospholipids. The protein is Chromosomal replication initiator protein DnaA of Streptomyces avermitilis (strain ATCC 31267 / DSM 46492 / JCM 5070 / NBRC 14893 / NCIMB 12804 / NRRL 8165 / MA-4680).